We begin with the raw amino-acid sequence, 796 residues long: Vacuolar protein sorting-associated protein 35 (796 aa).

Position 7 is a phosphoserine (S7). 2 interaction with SNX3 regions span residues 25–44 (VQSF…DALK) and 205–215 (DREKRERERQE). Positions 438-796 (CYVLSNVLDY…EGPIYEGLIL (359 aa)) are interaction with SLC11A2. The interval 500–693 (SEDPDQQYLI…DKNGEELHGG (194 aa)) is interaction with IGF2R cytoplasmic domain. Position 783 is a phosphoserine (S783). Phosphotyrosine is present on Y791.

It belongs to the VPS35 family. As to quaternary structure, component of the heterotrimeric retromer cargo-selective complex (CSC), also decribed as vacuolar protein sorting subcomplex (VPS), formed by VPS26 (VPS26A or VPS26B), VPS29 and VPS35. The CSC has a highly elongated structure with VPS26 and VPS29 binding independently at opposite distal ends of VPS35 as central platform. The CSC is believed to associate with variable sorting nexins to form functionally distinct retromer complex variants. The originally described retromer complex (also called SNX-BAR retromer) is a pentamer containing the CSC and a heterodimeric membrane-deforming subcomplex formed between SNX1 or SNX2 and SNX5 or SNX6 (also called SNX-BAR subcomplex); the respective CSC and SNX-BAR subcomplexes associate with low affinity. The CSC associates with SNX3 to form a SNX3-retromer complex. The CSC associates with SNX27, the WASH complex and the SNX-BAR subcomplex to form the SNX27-retromer complex. Interacts with VPS26A, VPS26B, VPS29, SNX1, SNX2, IGF2R, SNX3, GOLPH3, LRRK2, SLC11A2, WASHC2A, WASHC2C, FKBP15, WASHC1, RAB7A, SNX27, WASHC5, EHD1. Interacts with MAGEL2; leading to recruitment of the TRIM27:MAGEL2 E3 ubiquitin ligase complex retromer-containing endosomes. Interacts with SORCS2. In terms of assembly, (Microbial infection) Interacts with human papillomavirus 16 minor capsid protein L2 (via C-terminus); this interaction mediates the transport of the capsid from the early endosome to the Golgi apparatus. In terms of tissue distribution, ubiquitous. Highly expressed in heart, brain, placenta, skeletal muscle, spleen, thymus, testis, ovary, small intestine, kidney and colon.

Its subcellular location is the cytoplasm. The protein localises to the membrane. It is found in the endosome. It localises to the early endosome. The protein resides in the late endosome. In terms of biological role, acts as a component of the retromer cargo-selective complex (CSC). The CSC is believed to be the core functional component of retromer or respective retromer complex variants acting to prevent missorting of selected transmembrane cargo proteins into the lysosomal degradation pathway. The recruitment of the CSC to the endosomal membrane involves RAB7A and SNX3. The CSC seems to associate with the cytoplasmic domain of cargo proteins predominantly via VPS35; however, these interactions seem to be of low affinity and retromer SNX proteins may also contribute to cargo selectivity thus questioning the classical function of the CSC. The SNX-BAR retromer mediates retrograde transport of cargo proteins from endosomes to the trans-Golgi network (TGN) and is involved in endosome-to-plasma membrane transport for cargo protein recycling. The SNX3-retromer mediates the retrograde endosome-to-TGN transport of WLS distinct from the SNX-BAR retromer pathway. The SNX27-retromer is believed to be involved in endosome-to-plasma membrane trafficking and recycling of a broad spectrum of cargo proteins. The CSC seems to act as recruitment hub for other proteins, such as the WASH complex and TBC1D5. Required for retrograde transport of lysosomal enzyme receptor IGF2R and SLC11A2. Required to regulate transcytosis of the polymeric immunoglobulin receptor (pIgR-pIgA). Required for endosomal localization of WASHC2C. Mediates the association of the CSC with the WASH complex via WASHC2. Required for the endosomal localization of TBC1D5. Its function is as follows. (Microbial infection) The heterotrimeric retromer cargo-selective complex (CSC) mediates the exit of human papillomavirus from the early endosome and the delivery to the Golgi apparatus. The protein is Vacuolar protein sorting-associated protein 35 of Homo sapiens (Human).